Here is a 1338-residue protein sequence, read N- to C-terminus: Thioester-containing protein 1 allele S3 (1338 aa).

The first 21 residues, 1-21 (MWQFIRSRILTVIIFIGAAHG), serve as a signal peptide directing secretion. 5 N-linked (GlcNAc...) asparagine glycosylation sites follow: Asn-68, Asn-199, Asn-242, Asn-312, and Asn-481. The segment at 580–609 (ENEFDIFHSLGLFARTLDDILFDSANEKTG) is may contain the cleavage site. 4 N-linked (GlcNAc...) asparagine glycosylation sites follow: Asn-637, Asn-728, Asn-813, and Asn-828. A cross-link (isoglutamyl cysteine thioester (Cys-Gln)) is located at residues 859–862 (CGEQ). Cystine bridges form between Cys-1217-Cys-1283, Cys-1326-Cys-1338, and Cys-1329-Cys-1334.

As to quaternary structure, heterodimer of a TEP1-N chain and an TEP1-C chain non-covalently linked. Forms a complex composed of TEP1-N and TEP1-C heterodimer, LRIM1 and APL1C; the interaction stabilizes TEP1-N and TEP1-C heterodimer, prevents its binding to tissues while circulating in the hemolymph and protects the thioester bond from hydrolysis. Mature TEP1 and to a lesser extent full-length TEP1 interact with SPCLIP1; the interaction is induced by microbial infection. In the hemolymph, the full-length protein is cleaved by an unknow protease into a 75kDa N-terminal (TEP1-N) chain and an 80kDa C-terminal (TEP1-C) chain which remain non-covalently linked. The TEP1-C chain contains the thioester bond which covalently binds to the pathogen surface. Cleavage is induced by bacterial infection or aseptic wound injury. During embryonic and pupal development, the cleaved form is the predominant form. In terms of processing, N-glycosylated.

Its subcellular location is the secreted. Functionally, plays an essential role in the innate immune response against bacteria, fungi and protozoa infection. After proteolytic cleavage, the protein C-terminus binds covalently through a thioester bond to the pathogen surface resulting in pathogen clearance either by melanization or lysis. Initiate the recruitment and activation of a cascade of proteases, mostly of CLIP-domain serine proteases, which leads to the proteolytic cleavage of the prophenoloxidase (PPO) into active phenoloxidase (PO), the rate-limiting enzyme in melanin biosynthesis. In response to parasite P.berghei-mediated infection, binds to and mediates killing of ookinetes, as they egress from midgut epithelial cells into the basal labyrinth, by both lysis and melanization. During bacterial infection, binds to both Gram-positive and Gram-negative bacteria but only promotes phagocytosis of Gram-negative bacteria. Promotes the accumulation of SPCLIP1 onto the surface of P.berghei ookinetes and bacterium E.coli which leads to the melanization of the pathogen. Recruits CLIPA2 to bacteria surface. In response to bacterial infection, required for periostial hemocyte aggregation, but not for the aggregation of sessile hemocytes in non-periostial regions. During the late stage of fungus B.bassiana-mediated infection, required for the initiation of hyphae melanization by binding to the surface of hyphae and recruiting prophenoloxidase PPO to them. Plays a role in male fertility by binding to defective sperm cells and promoting their removal during spermatogenesis. In terms of biological role, binds to and mediates killing of parasite P.bergei ookinetes by lysis. Its function is as follows. Binds covalently through a thioester bond to the pathogen surface resulting in pathogen clearance. The protein is Thioester-containing protein 1 allele S3 of Anopheles gambiae (African malaria mosquito).